The primary structure comprises 354 residues: Uroporphyrinogen decarboxylase (354 aa).

Residues R27–R31, D77, Y154, T209, and H327 each bind substrate.

Belongs to the uroporphyrinogen decarboxylase family. As to quaternary structure, homodimer.

The protein resides in the cytoplasm. It carries out the reaction uroporphyrinogen III + 4 H(+) = coproporphyrinogen III + 4 CO2. Its pathway is porphyrin-containing compound metabolism; protoporphyrin-IX biosynthesis; coproporphyrinogen-III from 5-aminolevulinate: step 4/4. In terms of biological role, catalyzes the decarboxylation of four acetate groups of uroporphyrinogen-III to yield coproporphyrinogen-III. The chain is Uroporphyrinogen decarboxylase from Serratia proteamaculans (strain 568).